Consider the following 686-residue polypeptide: Osmo-dependent choline transporter BetT2 (686 aa).

The Cytoplasmic portion of the chain corresponds to M1–R22. A helical membrane pass occupies residues V23–N43. At D44–T60 the chain is on the periplasmic side. The chain crosses the membrane as a helical span at residues F61–C81. Residues S82 to L100 lie on the Cytoplasmic side of the membrane. Residues L101–V121 traverse the membrane as a helical segment. Topologically, residues A122–L150 are periplasmic. A helical transmembrane segment spans residues F151–F171. Residues S172–T203 are Cytoplasmic-facing. A helical membrane pass occupies residues A204–L224. The Periplasmic segment spans residues N225 to N237. Residues L238–S258 form a helical membrane-spanning segment. The Cytoplasmic segment spans residues G259–R265. Residues I266–G286 traverse the membrane as a helical segment. Over N287 to S325 the chain is Periplasmic. A helical membrane pass occupies residues W326–A346. Residues R347 to E356 are Cytoplasmic-facing. A helical transmembrane segment spans residues F357–G377. Residues N378–P412 are Periplasmic-facing. The helical transmembrane segment at W413–A433 threads the bilayer. The Cytoplasmic portion of the chain corresponds to D434–S459. The chain crosses the membrane as a helical span at residues V460 to T480. At A481 to N484 the chain is on the periplasmic side. A helical transmembrane segment spans residues A485–Y505. The Cytoplasmic segment spans residues K506–A686.

Belongs to the BCCT transporter (TC 2.A.15) family.

It localises to the cell inner membrane. Functionally, uptake of choline in the presence of high salinity. May primarily serve for osmoprotection. The chain is Osmo-dependent choline transporter BetT2 from Acinetobacter baylyi (strain ATCC 33305 / BD413 / ADP1).